Consider the following 121-residue polypeptide: Immunoglobulin heavy variable 6-1 (121 aa).

An N-terminal signal peptide occupies residues 1–20 (MSVSFLIFLPVLGLPWGVLS). Residues 21–45 (QVQLQQSGPGLVKPSQTLSLTCAIS) form a framework-1 region. One can recognise an Ig-like domain in the interval 21-121 (QVQLQQSGPG…EDTAVYYCAR (101 aa)). A disulfide bridge connects residues Cys-42 and Cys-119. Residues 46-55 (GDSVSSNSAA) form a complementarity-determining-1 region. The tract at residues 56-72 (WNWIRQSPSRGLEWLGR) is framework-2. The tract at residues 73-81 (TYYRSKWYN) is complementarity-determining-2. The segment at 82-119 (DYAVSVKSRITINPDTSKNQFSLQLNSVTPEDTAVYYC) is framework-3. Residues 120–121 (AR) are complementarity-determining-3.

As to quaternary structure, immunoglobulins are composed of two identical heavy chains and two identical light chains; disulfide-linked.

Its subcellular location is the secreted. The protein resides in the cell membrane. Functionally, v region of the variable domain of immunoglobulin heavy chains that participates in the antigen recognition. Immunoglobulins, also known as antibodies, are membrane-bound or secreted glycoproteins produced by B lymphocytes. In the recognition phase of humoral immunity, the membrane-bound immunoglobulins serve as receptors which, upon binding of a specific antigen, trigger the clonal expansion and differentiation of B lymphocytes into immunoglobulins-secreting plasma cells. Secreted immunoglobulins mediate the effector phase of humoral immunity, which results in the elimination of bound antigens. The antigen binding site is formed by the variable domain of one heavy chain, together with that of its associated light chain. Thus, each immunoglobulin has two antigen binding sites with remarkable affinity for a particular antigen. The variable domains are assembled by a process called V-(D)-J rearrangement and can then be subjected to somatic hypermutations which, after exposure to antigen and selection, allow affinity maturation for a particular antigen. The sequence is that of Immunoglobulin heavy variable 6-1 from Homo sapiens (Human).